A 629-amino-acid chain; its full sequence is Glutamyl-tRNA(Gln) amidotransferase subunit E (629 aa).

The disordered stretch occupies residues 405–426 (PEETRRALPDGNTQYMRPLPGK).

This sequence belongs to the GatB/GatE family. GatE subfamily. As to quaternary structure, heterodimer of GatD and GatE.

It catalyses the reaction L-glutamyl-tRNA(Gln) + L-glutamine + ATP + H2O = L-glutaminyl-tRNA(Gln) + L-glutamate + ADP + phosphate + H(+). Functionally, allows the formation of correctly charged Gln-tRNA(Gln) through the transamidation of misacylated Glu-tRNA(Gln) in organisms which lack glutaminyl-tRNA synthetase. The reaction takes place in the presence of glutamine and ATP through an activated gamma-phospho-Glu-tRNA(Gln). The GatDE system is specific for glutamate and does not act on aspartate. This Thermococcus sibiricus (strain DSM 12597 / MM 739) protein is Glutamyl-tRNA(Gln) amidotransferase subunit E.